A 152-amino-acid polypeptide reads, in one-letter code: Xanthine-guanine phosphoribosyltransferase (152 aa).

5-phospho-alpha-D-ribose 1-diphosphate is bound by residues 37-38 (RG), Arg-69, and 88-96 (DDLVDTGGT). Arg-69 serves as a coordination point for GMP. Asp-89 is a Mg(2+) binding site. Positions 92 and 135 each coordinate guanine. Asp-92 and Ile-135 together coordinate xanthine. GMP contacts are provided by residues 92 to 96 (DTGGT) and 134 to 135 (WI).

It belongs to the purine/pyrimidine phosphoribosyltransferase family. XGPT subfamily. As to quaternary structure, homotetramer. It depends on Mg(2+) as a cofactor.

It is found in the cell inner membrane. It carries out the reaction GMP + diphosphate = guanine + 5-phospho-alpha-D-ribose 1-diphosphate. It catalyses the reaction XMP + diphosphate = xanthine + 5-phospho-alpha-D-ribose 1-diphosphate. The catalysed reaction is IMP + diphosphate = hypoxanthine + 5-phospho-alpha-D-ribose 1-diphosphate. Its pathway is purine metabolism; GMP biosynthesis via salvage pathway; GMP from guanine: step 1/1. It functions in the pathway purine metabolism; XMP biosynthesis via salvage pathway; XMP from xanthine: step 1/1. Purine salvage pathway enzyme that catalyzes the transfer of the ribosyl-5-phosphate group from 5-phospho-alpha-D-ribose 1-diphosphate (PRPP) to the N9 position of the 6-oxopurines guanine and xanthine to form the corresponding ribonucleotides GMP (guanosine 5'-monophosphate) and XMP (xanthosine 5'-monophosphate), with the release of PPi. To a lesser extent, also acts on hypoxanthine. This Escherichia coli O127:H6 (strain E2348/69 / EPEC) protein is Xanthine-guanine phosphoribosyltransferase.